The primary structure comprises 316 residues: Small ribosomal subunit biogenesis GTPase RsgA (316 aa).

Residues 83 to 248 form the CP-type G domain; it reads DQYKSKLFAA…LIDSPGFQEF (166 aa). GTP-binding positions include 131–134 and 185–193; these read NKTD and GQSGMGKST. Zn(2+) contacts are provided by cysteine 272, cysteine 277, histidine 279, and cysteine 285.

This sequence belongs to the TRAFAC class YlqF/YawG GTPase family. RsgA subfamily. In terms of assembly, monomer. Associates with 30S ribosomal subunit, binds 16S rRNA. The cofactor is Zn(2+).

The protein localises to the cytoplasm. Functionally, one of several proteins that assist in the late maturation steps of the functional core of the 30S ribosomal subunit. Helps release RbfA from mature subunits. May play a role in the assembly of ribosomal proteins into the subunit. Circularly permuted GTPase that catalyzes slow GTP hydrolysis, GTPase activity is stimulated by the 30S ribosomal subunit. The chain is Small ribosomal subunit biogenesis GTPase RsgA from Paraburkholderia phytofirmans (strain DSM 17436 / LMG 22146 / PsJN) (Burkholderia phytofirmans).